We begin with the raw amino-acid sequence, 88 residues long: Small ribosomal subunit protein bS20 (88 aa).

The interval 1–23 is disordered; sequence MANSPQAKKRARQNDKARAHNAS.

Belongs to the bacterial ribosomal protein bS20 family.

Binds directly to 16S ribosomal RNA. In Saccharophagus degradans (strain 2-40 / ATCC 43961 / DSM 17024), this protein is Small ribosomal subunit protein bS20.